A 265-amino-acid chain; its full sequence is Exosome complex component RRP42 (265 aa).

It belongs to the RNase PH family. In terms of assembly, component of the RNA exosome complex. Specifically part of the catalytically inactive RNA exosome core complex (Exo-9) which may associate with the catalytic subunits RRP6 and DIS3 in cytoplasmic- and nuclear-specific RNA exosome complex forms. Exo-9 is formed by a hexameric base ring of RNase PH domain-containing subunits and a cap ring consisting of CSL4, RRP4 and RRP40.

It is found in the cytoplasm. It localises to the nucleus. The protein resides in the nucleolus. Non-catalytic component of the RNA exosome complex which has 3'-&gt;5' exoribonuclease activity and participates in a multitude of cellular RNA processing and degradation events. In the nucleus, the RNA exosome complex is involved in proper maturation of stable RNA species such as rRNA, snRNA and snoRNA, in the elimination of RNA processing by-products and non-coding 'pervasive' transcripts, such as antisense RNA species and cryptic unstable transcripts (CUTs), and of mRNAs with processing defects, thereby limiting or excluding their export to the cytoplasm. In the cytoplasm, the RNA exosome complex is involved in general mRNA turnover and in RNA surveillance pathways, preventing translation of aberrant mRNAs. The catalytic inactive RNA exosome core complex of 9 subunits (Exo-9) is proposed to play a pivotal role in the binding and presentation of RNA for ribonucleolysis, and to serve as a scaffold for the association with catalytic subunits and accessory proteins or complexes. RRP42 is part of the hexameric ring of RNase PH domain-containing subunits proposed to form a central channel which threads RNA substrates for degradation. The protein is Exosome complex component RRP42 (RRP42) of Saccharomyces cerevisiae (strain ATCC 204508 / S288c) (Baker's yeast).